A 226-amino-acid polypeptide reads, in one-letter code: ATP synthase F(0) complex subunit a (226 aa).

A run of 5 helical transmembrane segments spans residues 5–25 (LFAPFMIPVMLGIPITTLIII), 68–88 (WSLMLISLFLFIASTNLLGML), 97–117 (QLSMNVGMAIPLWAGTVTTGF), 136–156 (FLIPMLVIIETISLFIQPVAW), and 189–209 (AFITFTILALLTILEFAVALI).

The protein belongs to the ATPase A chain family. As to quaternary structure, component of the ATP synthase complex composed at least of ATP5F1A/subunit alpha, ATP5F1B/subunit beta, ATP5MC1/subunit c (homooctomer), MT-ATP6/subunit a, MT-ATP8/subunit 8, ATP5ME/subunit e, ATP5MF/subunit f, ATP5MG/subunit g, ATP5MK/subunit k, ATP5MJ/subunit j, ATP5F1C/subunit gamma, ATP5F1D/subunit delta, ATP5F1E/subunit epsilon, ATP5PF/subunit F6, ATP5PB/subunit b, ATP5PD/subunit d, ATP5PO/subunit OSCP. ATP synthase complex consists of a soluble F(1) head domain (subunits alpha(3) and beta(3)) - the catalytic core - and a membrane F(0) domain - the membrane proton channel (subunits c, a, 8, e, f, g, k and j). These two domains are linked by a central stalk (subunits gamma, delta, and epsilon) rotating inside the F1 region and a stationary peripheral stalk (subunits F6, b, d, and OSCP). Interacts with DNAJC30; interaction is direct.

The protein resides in the mitochondrion inner membrane. It carries out the reaction H(+)(in) = H(+)(out). Functionally, subunit a, of the mitochondrial membrane ATP synthase complex (F(1)F(0) ATP synthase or Complex V) that produces ATP from ADP in the presence of a proton gradient across the membrane which is generated by electron transport complexes of the respiratory chain. ATP synthase complex consist of a soluble F(1) head domain - the catalytic core - and a membrane F(1) domain - the membrane proton channel. These two domains are linked by a central stalk rotating inside the F(1) region and a stationary peripheral stalk. During catalysis, ATP synthesis in the catalytic domain of F(1) is coupled via a rotary mechanism of the central stalk subunits to proton translocation. With the subunit c (ATP5MC1), forms the proton-conducting channel in the F(0) domain, that contains two crucial half-channels (inlet and outlet) that facilitate proton movement from the mitochondrial intermembrane space (IMS) into the matrix. Protons are taken up via the inlet half-channel and released through the outlet half-channel, following a Grotthuss mechanism. The protein is ATP synthase F(0) complex subunit a of Balaenoptera physalus (Fin whale).